A 247-amino-acid chain; its full sequence is MSEATTTLDGWYCLHDLRSIDWAAWKTLSSDERGQAVSEFLNVVEKWNEVATAKKGSHAMYTVVGQKADIMLMILRPTMEELNEIETELNKTTLAEYLVPAYSYVSVVELSNYLPADEDPYQNPQILARLYPELPKANHICFYPMDKRRQGDDNWYMLPMEERKKMMYSHSKIGRQYAGKVRQVISGSVGFDDFEWGVTLFADDVLQFKKLIYEMRFDEVSARYGEFGTFFVGNILPDEKVEKFLHI.

Fe-coproporphyrin III-binding positions include Arg129, 143–147 (YPMDK), His170, Gln183, and Ser221. Residue Tyr143 is part of the active site.

It belongs to the ChdC family. Type 1 subfamily. Requires Fe-coproporphyrin III as cofactor.

The catalysed reaction is Fe-coproporphyrin III + 2 H2O2 + 2 H(+) = heme b + 2 CO2 + 4 H2O. It catalyses the reaction Fe-coproporphyrin III + H2O2 + H(+) = harderoheme III + CO2 + 2 H2O. It carries out the reaction harderoheme III + H2O2 + H(+) = heme b + CO2 + 2 H2O. It participates in porphyrin-containing compound metabolism; protoheme biosynthesis. Involved in coproporphyrin-dependent heme b biosynthesis. Catalyzes the decarboxylation of Fe-coproporphyrin III (coproheme) to heme b (protoheme IX), the last step of the pathway. The reaction occurs in a stepwise manner with a three-propionate intermediate. This is Coproheme decarboxylase from Bacillus mycoides (strain KBAB4) (Bacillus weihenstephanensis).